Reading from the N-terminus, the 297-residue chain is Acetyl-coenzyme A carboxylase carboxyl transferase subunit beta (297 aa).

The disordered stretch occupies residues 1-23 (MSWIERILGRTSSSSSSSKSKVP). The region spanning 26 to 295 (VWTKCTSCEQ…PFKTAELIVE (270 aa)) is the CoA carboxyltransferase N-terminal domain. Positions 30, 33, 49, and 52 each coordinate Zn(2+). The C4-type zinc finger occupies 30 to 52 (CTSCEQVLYSEELKRNMHVCPKC).

The protein belongs to the AccD/PCCB family. Acetyl-CoA carboxylase is a heterohexamer composed of biotin carboxyl carrier protein (AccB), biotin carboxylase (AccC) and two subunits each of ACCase subunit alpha (AccA) and ACCase subunit beta (AccD). The cofactor is Zn(2+).

Its subcellular location is the cytoplasm. It carries out the reaction N(6)-carboxybiotinyl-L-lysyl-[protein] + acetyl-CoA = N(6)-biotinyl-L-lysyl-[protein] + malonyl-CoA. Its pathway is lipid metabolism; malonyl-CoA biosynthesis; malonyl-CoA from acetyl-CoA: step 1/1. Functionally, component of the acetyl coenzyme A carboxylase (ACC) complex. Biotin carboxylase (BC) catalyzes the carboxylation of biotin on its carrier protein (BCCP) and then the CO(2) group is transferred by the transcarboxylase to acetyl-CoA to form malonyl-CoA. The protein is Acetyl-coenzyme A carboxylase carboxyl transferase subunit beta of Actinobacillus pleuropneumoniae serotype 5b (strain L20).